Here is a 454-residue protein sequence, read N- to C-terminus: Carbamoyl phosphate synthase arginine-specific small chain (454 aa).

Residues 1–29 constitute a mitochondrion transit peptide; that stretch reads MMFSRFFKAVPARAPAFSSPLPVYQARTM. Residues 219–406 form the Glutamine amidotransferase type-1 domain; sequence HVAVLDCGVK…IDSVKKYKNS (188 aa). The Nucleophile role is filled by C295. Residues H379 and E381 contribute to the active site.

It belongs to the CarA family. As to quaternary structure, heterodimer composed of 2 chains; the small (or glutamine) chain promotes the hydrolysis of glutamine to ammonia, which is used by the large (or ammonia) chain to synthesize carbamoyl phosphate.

It localises to the mitochondrion matrix. The enzyme catalyses hydrogencarbonate + L-glutamine + 2 ATP + H2O = carbamoyl phosphate + L-glutamate + 2 ADP + phosphate + 2 H(+). It carries out the reaction L-glutamine + H2O = L-glutamate + NH4(+). Its pathway is amino-acid biosynthesis; L-arginine biosynthesis; carbamoyl phosphate from bicarbonate: step 1/1. In terms of biological role, small subunit of the arginine-specific carbamoyl phosphate synthase (CPSase). CPSase catalyzes the formation of carbamoyl phosphate from the ammonia moiety of glutamine, carbonate, and phosphate donated by ATP, the first step of the arginine biosynthetic pathway. The small subunit (glutamine amidotransferase) binds and cleaves glutamine to supply the large subunit with the substrate ammonia. This is Carbamoyl phosphate synthase arginine-specific small chain (cpa-1) from Emericella nidulans (strain FGSC A4 / ATCC 38163 / CBS 112.46 / NRRL 194 / M139) (Aspergillus nidulans).